Consider the following 598-residue polypeptide: Thiamine transporter (598 aa).

Over 1-41 the chain is Cytoplasmic; that stretch reads MSFGSKVSRALRFLEIPVKDRASVSFLKNPDLQPIKSANQT. A helical membrane pass occupies residues 42 to 62; sequence WGFWSNFAYWGVMSFSVGTWM. The Extracellular segment spans residues 63–73; sequence SASSALGVGLS. The helical transmembrane segment at 74-94 threads the bilayer; that stretch reads YPETIGTFIVGDVLTIIFTLA. Over 95-111 the chain is Cytoplasmic; it reads NSCPGYDWKVGFTLAQR. A helical transmembrane segment spans residues 112 to 132; that stretch reads FVFGIYGSAFGIIIRILMSIV. The Extracellular portion of the chain corresponds to 133–173; it reads NYGSNAWVGGLCINMILDSWSHHYLHLPNTLSSKVAMTTKE. A helical transmembrane segment spans residues 174–194; that stretch reads LIGFIIFHVLTAFCYLMKPYH. Over 195–197 the chain is Cytoplasmic; sequence MNY. Residues 198 to 218 form a helical membrane-spanning segment; the sequence is ILIWSCVATFFSMLGMVIYLA. Topologically, residues 219–240 are extracellular; it reads KQAHGVGELFTSTKSTATGSTK. Residues 241–261 form a helical membrane-spanning segment; the sequence is AWAWVYMISYWFGSVSPGSTN. Topologically, residues 262–274 are cytoplasmic; that stretch reads QSDYSRFGSSNWA. Residues 275-295 traverse the membrane as a helical segment; that stretch reads IWAGTICALLIPTTLIPVFGV. At 296–332 the chain is on the extracellular side; sequence IGASTCDKLYGEQYWMPMDIFNHWLTTNYSAGARAGA. The chain crosses the membrane as a helical span at residues 333 to 353; the sequence is FFCGLSFVLSQMSYTISNCGF. The Cytoplasmic segment spans residues 354–371; that stretch reads ASGMDLAGLLPKYVDIKR. A helical membrane pass occupies residues 372-392; sequence GALFAACVSWACLPWNFYNSS. The Extracellular portion of the chain corresponds to 393 to 394; sequence ST. Residues 395–415 form a helical membrane-spanning segment; it reads FLTVMSSFGVVMTPIISVMIC. The Cytoplasmic segment spans residues 416-446; sequence DNFLIRKRQYSITNAFILKGEYYFTKGVNWR. A helical membrane pass occupies residues 447–467; the sequence is AIVAWVCGMTPGLPGIAWEVN. Residues 468 to 483 are Extracellular-facing; it reads NDYFHNTGIVNFFYGD. A helical membrane pass occupies residues 484 to 504; the sequence is SFFSFLISFFVYWGLCLLFPF. Residues 505 to 598 lie on the Cytoplasmic side of the membrane; it reads KITVKHDDKD…QSSTASEKAA (94 aa). Serine 560 carries the phosphoserine modification. Positions 574–598 are disordered; it reads NTNEFEIVHHKNNEKQSSTASEKAA. Residues 588–598 are compositionally biased toward polar residues; sequence KQSSTASEKAA.

Belongs to the purine-cytosine permease (2.A.39) family.

The protein resides in the membrane. Functionally, responsible for intake of thiamine. The protein is Thiamine transporter (THI7) of Saccharomyces cerevisiae (strain ATCC 204508 / S288c) (Baker's yeast).